The following is a 197-amino-acid chain: 3-isopropylmalate dehydratase small subunit (197 aa).

This sequence belongs to the LeuD family. LeuD type 1 subfamily. In terms of assembly, heterodimer of LeuC and LeuD.

The catalysed reaction is (2R,3S)-3-isopropylmalate = (2S)-2-isopropylmalate. It functions in the pathway amino-acid biosynthesis; L-leucine biosynthesis; L-leucine from 3-methyl-2-oxobutanoate: step 2/4. In terms of biological role, catalyzes the isomerization between 2-isopropylmalate and 3-isopropylmalate, via the formation of 2-isopropylmaleate. The polypeptide is 3-isopropylmalate dehydratase small subunit (Mycobacterium sp. (strain KMS)).